The primary structure comprises 406 residues: MAENGQNCDQRRVAMNKEQYNGNFTDPSSVNEKKRRDREERQNIVLWRQPLITLQYFSLETLVILKEWTSKLWHRQSIVVSFLLLLAVLTATYYVEGAHQQYVQRIEKQFLLYAYWIGLGILSSVGLGTGLHTFLLYLGPHIASVTLAAYECNSVNFPEPPYPDQIICPDEEGTEGTISLWSIISKVRIEACMWGIGTAIGELPPYFMARAARLSGAEPDDEEYQEFEEMLEHAETAQDFASRAKLAVQNLVQKVGFFGILACASIPNPLFDLAGITCGHFLVPFWTFFGATLIGKAIIKMHIQKLFVIVAFSKHIVEQMVAFIGAVPGIGPSLQKPFQEYLEAQRQKLHHRSEMGTPQGENWLSWMFEKLVVVMVCYFILSIINSMAQSYAKRIQQRLDPKEKTK.

At A2 the chain carries N-acetylalanine. At 2–43 (AENGQNCDQRRVAMNKEQYNGNFTDPSSVNEKKRRDREERQN) the chain is on the cytoplasmic side. The helical transmembrane segment at 44–63 (IVLWRQPLITLQYFSLETLV) threads the bilayer. At 64 to 77 (ILKEWTSKLWHRQS) the chain is on the extracellular side. A helical membrane pass occupies residues 78-98 (IVVSFLLLLAVLTATYYVEGA). Over 99–109 (HQQYVQRIEKQ) the chain is Cytoplasmic. A helical membrane pass occupies residues 110-130 (FLLYAYWIGLGILSSVGLGTG). Over 131 to 250 (LHTFLLYLGP…ASRAKLAVQN (120 aa)) the chain is Extracellular. A VTT domain region spans residues 173 to 316 (GTEGTISLWS…FVIVAFSKHI (144 aa)). Residues 251–271 (LVQKVGFFGILACASIPNPLF) form a helical membrane-spanning segment. At 272 to 273 (DL) the chain is on the cytoplasmic side. A helical transmembrane segment spans residues 274 to 294 (AGITCGHFLVPFWTFFGATLI). The Extracellular segment spans residues 295–306 (GKAIIKMHIQKL). Residues 307 to 327 (FVIVAFSKHIVEQMVAFIGAV) form a helical membrane-spanning segment. At 328–363 (PGIGPSLQKPFQEYLEAQRQKLHHRSEMGTPQGENW) the chain is on the cytoplasmic side. The helical transmembrane segment at 364 to 384 (LSWMFEKLVVVMVCYFILSII) threads the bilayer. Over 385–406 (NSMAQSYAKRIQQRLDPKEKTK) the chain is Extracellular.

This sequence belongs to the VMP1 family. In terms of assembly, interacts with BECN1. Interacts with TJP1. Interacts with TP53INP2. Interacts with TMEM41B. Interacts with ATP2A2, PLN and SLN; competes with PLN and SLN to prevent them from forming an inhibitory complex with ATP2A2. Interacts with ATG2A.

Its subcellular location is the endoplasmic reticulum-Golgi intermediate compartment membrane. It localises to the cell membrane. The protein localises to the vacuole membrane. The protein resides in the endoplasmic reticulum membrane. The enzyme catalyses a 1,2-diacyl-sn-glycero-3-phospho-L-serine(in) = a 1,2-diacyl-sn-glycero-3-phospho-L-serine(out). It catalyses the reaction cholesterol(in) = cholesterol(out). The catalysed reaction is a 1,2-diacyl-sn-glycero-3-phosphocholine(in) = a 1,2-diacyl-sn-glycero-3-phosphocholine(out). It carries out the reaction a 1,2-diacyl-sn-glycero-3-phosphoethanolamine(in) = a 1,2-diacyl-sn-glycero-3-phosphoethanolamine(out). In terms of biological role, phospholipid scramblase involved in lipid homeostasis and membrane dynamics processes. Has phospholipid scramblase activity toward cholesterol and phosphatidylserine, as well as phosphatidylethanolamine and phosphatidylcholine. Required for autophagosome formation: participates in early stages of autophagosome biogenesis at the endoplasmic reticulum (ER) membrane by reequilibrating the leaflets of the ER as lipids are extracted by ATG2 (ATG2A or ATG2B) to mediate autophagosome assembly. Regulates ATP2A2 activity to control ER-isolation membrane contacts for autophagosome formation. In addition to autophagy, involved in other processes in which phospholipid scramblase activity is required. Modulates ER contacts with lipid droplets, mitochondria and endosomes. Plays an essential role in formation of cell junctions. Upon stress such as bacterial and viral infection, promotes formation of cytoplasmic vacuoles followed by cell death. Involved in the cytoplasmic vacuolization of acinar cells during the early stage of acute pancreatitis. This is Vacuole membrane protein 1 from Bos taurus (Bovine).